The chain runs to 396 residues: Adenylyltransferase and sulfurtransferase UBA4 (396 aa).

Residues Gly51, Asp72, 79 to 83 (SNLHR), Lys95, and 139 to 140 (DG) contribute to the ATP site. 2 residues coordinate Zn(2+): Cys180 and Cys183. Residue Cys197 is the Glycyl thioester intermediate; for adenylyltransferase activity of the active site. Zn(2+)-binding residues include Cys257 and Cys260. The 90-residue stretch at 305 to 394 (VSTKHILLDV…WAKNVDEKFP (90 aa)) folds into the Rhodanese domain. Cys355 acts as the Cysteine persulfide intermediate; for sulfurtransferase activity in catalysis.

In the N-terminal section; belongs to the HesA/MoeB/ThiF family. UBA4 subfamily. It depends on Zn(2+) as a cofactor.

It is found in the cytoplasm. The protein resides in the cytosol. The protein operates within tRNA modification; 5-methoxycarbonylmethyl-2-thiouridine-tRNA biosynthesis. In terms of biological role, plays a central role in 2-thiolation of mcm(5)S(2)U at tRNA wobble positions of cytosolic tRNA(Lys), tRNA(Glu) and tRNA(Gln). Acts by mediating the C-terminal thiocarboxylation of sulfur carrier URM1. Its N-terminus first activates URM1 as acyl-adenylate (-COAMP), then the persulfide sulfur on the catalytic cysteine is transferred to URM1 to form thiocarboxylation (-COSH) of its C-terminus. The reaction probably involves hydrogen sulfide that is generated from the persulfide intermediate and that acts as a nucleophile towards URM1. Subsequently, a transient disulfide bond is formed. Does not use thiosulfate as sulfur donor; NFS1 probably acting as a sulfur donor for thiocarboxylation reactions. Prior mcm(5) tRNA modification by the elongator complex is required for 2-thiolation. May also be involved in protein urmylation. This chain is Adenylyltransferase and sulfurtransferase UBA4, found in Yarrowia lipolytica (strain CLIB 122 / E 150) (Yeast).